A 538-amino-acid polypeptide reads, in one-letter code: Inositol-3-phosphate synthase (538 aa).

G74, G75, N76, N77, D150, S186, V187, Q197, D198, R200, T247, A248, N249, T250, G298, S299, D323, S326, N357, N358, D359, K372, G412, D413, D441, and S442 together coordinate NAD(+).

Belongs to the myo-inositol 1-phosphate synthase family. Homotetramer. NAD(+) serves as cofactor.

Its subcellular location is the cytoplasm. It catalyses the reaction D-glucose 6-phosphate = 1D-myo-inositol 3-phosphate. It functions in the pathway polyol metabolism; myo-inositol biosynthesis; myo-inositol from D-glucose 6-phosphate: step 1/2. Functionally, key enzyme in myo-inositol biosynthesis pathway that catalyzes the conversion of glucose 6-phosphate to 1-myo-inositol 1-phosphate in a NAD-dependent manner. Rate-limiting enzyme in the synthesis of all inositol-containing compounds. The polypeptide is Inositol-3-phosphate synthase (INO1) (Candida glabrata (strain ATCC 2001 / BCRC 20586 / JCM 3761 / NBRC 0622 / NRRL Y-65 / CBS 138) (Yeast)).